We begin with the raw amino-acid sequence, 435 residues long: Trigger factor (435 aa).

The interval 125–147 (MEVPEQDTSVSDADVDSELENKR) is disordered. Residues 164–249 (GDTVVIDYEG…IHEVKEKQLP (86 aa)) form the PPIase FKBP-type domain.

This sequence belongs to the FKBP-type PPIase family. Tig subfamily.

The protein localises to the cytoplasm. It carries out the reaction [protein]-peptidylproline (omega=180) = [protein]-peptidylproline (omega=0). Involved in protein export. Acts as a chaperone by maintaining the newly synthesized protein in an open conformation. Functions as a peptidyl-prolyl cis-trans isomerase. This is Trigger factor from Limosilactobacillus fermentum (strain NBRC 3956 / LMG 18251) (Lactobacillus fermentum).